The following is a 215-amino-acid chain: ATP-dependent dethiobiotin synthetase BioD (215 aa).

Residue 13 to 18 (DIGKTV) coordinates ATP. Residue T17 participates in Mg(2+) binding. The active site involves K38. A substrate-binding site is contributed by T42. ATP is bound by residues D50, 115–118 (EGAG), and 175–176 (NH). 2 residues coordinate Mg(2+): D50 and E115.

Belongs to the dethiobiotin synthetase family. As to quaternary structure, homodimer. Mg(2+) serves as cofactor.

It is found in the cytoplasm. It catalyses the reaction (7R,8S)-7,8-diammoniononanoate + CO2 + ATP = (4R,5S)-dethiobiotin + ADP + phosphate + 3 H(+). It participates in cofactor biosynthesis; biotin biosynthesis; biotin from 7,8-diaminononanoate: step 1/2. Catalyzes a mechanistically unusual reaction, the ATP-dependent insertion of CO2 between the N7 and N8 nitrogen atoms of 7,8-diaminopelargonic acid (DAPA, also called 7,8-diammoniononanoate) to form a ureido ring. This chain is ATP-dependent dethiobiotin synthetase BioD, found in Neisseria meningitidis serogroup B (strain ATCC BAA-335 / MC58).